We begin with the raw amino-acid sequence, 493 residues long: Aspartyl/glutamyl-tRNA(Asn/Gln) amidotransferase subunit B (493 aa).

A disordered region spans residues 268-291 (HYQEADGSTSKGRPKETAEDYRYF). Residues 280–291 (RPKETAEDYRYF) are compositionally biased toward basic and acidic residues.

This sequence belongs to the GatB/GatE family. GatB subfamily. As to quaternary structure, heterotrimer of A, B and C subunits.

The enzyme catalyses L-glutamyl-tRNA(Gln) + L-glutamine + ATP + H2O = L-glutaminyl-tRNA(Gln) + L-glutamate + ADP + phosphate + H(+). The catalysed reaction is L-aspartyl-tRNA(Asn) + L-glutamine + ATP + H2O = L-asparaginyl-tRNA(Asn) + L-glutamate + ADP + phosphate + 2 H(+). In terms of biological role, allows the formation of correctly charged Asn-tRNA(Asn) or Gln-tRNA(Gln) through the transamidation of misacylated Asp-tRNA(Asn) or Glu-tRNA(Gln) in organisms which lack either or both of asparaginyl-tRNA or glutaminyl-tRNA synthetases. The reaction takes place in the presence of glutamine and ATP through an activated phospho-Asp-tRNA(Asn) or phospho-Glu-tRNA(Gln). The polypeptide is Aspartyl/glutamyl-tRNA(Asn/Gln) amidotransferase subunit B (Corynebacterium glutamicum (strain ATCC 13032 / DSM 20300 / JCM 1318 / BCRC 11384 / CCUG 27702 / LMG 3730 / NBRC 12168 / NCIMB 10025 / NRRL B-2784 / 534)).